We begin with the raw amino-acid sequence, 207 residues long: Ribosomal RNA small subunit methyltransferase G (207 aa).

Residues Gly-73, Leu-78, 124 to 125, and Arg-139 each bind S-adenosyl-L-methionine; that span reads VE.

The protein belongs to the methyltransferase superfamily. RNA methyltransferase RsmG family.

It localises to the cytoplasm. The enzyme catalyses guanosine(527) in 16S rRNA + S-adenosyl-L-methionine = N(7)-methylguanosine(527) in 16S rRNA + S-adenosyl-L-homocysteine. Functionally, specifically methylates the N7 position of guanine in position 527 of 16S rRNA. This chain is Ribosomal RNA small subunit methyltransferase G, found in Klebsiella pneumoniae subsp. pneumoniae (strain ATCC 700721 / MGH 78578).